Here is a 172-residue protein sequence, read N- to C-terminus: Nicotinamide-nucleotide adenylyltransferase (172 aa).

Belongs to the archaeal NMN adenylyltransferase family.

The protein localises to the cytoplasm. The enzyme catalyses beta-nicotinamide D-ribonucleotide + ATP + H(+) = diphosphate + NAD(+). It participates in cofactor biosynthesis; NAD(+) biosynthesis; NAD(+) from nicotinamide D-ribonucleotide: step 1/1. The sequence is that of Nicotinamide-nucleotide adenylyltransferase from Methanococcus vannielii (strain ATCC 35089 / DSM 1224 / JCM 13029 / OCM 148 / SB).